The following is a 557-amino-acid chain: Glutathione hydrolase proenzyme (557 aa).

The signal sequence occupies residues M1–A24. R94 lines the L-glutamate pocket. T364 serves as the catalytic Nucleophile. L-glutamate is bound by residues T382, N384, E403, D406, S435–S436, and G456–G457.

Belongs to the gamma-glutamyltransferase family. In terms of assembly, this enzyme consists of two polypeptide chains, which are synthesized in precursor form from a single polypeptide. Cleaved by autocatalysis into a large and a small subunit.

Its subcellular location is the periplasm. The catalysed reaction is an N-terminal (5-L-glutamyl)-[peptide] + an alpha-amino acid = 5-L-glutamyl amino acid + an N-terminal L-alpha-aminoacyl-[peptide]. It catalyses the reaction glutathione + H2O = L-cysteinylglycine + L-glutamate. It carries out the reaction an S-substituted glutathione + H2O = an S-substituted L-cysteinylglycine + L-glutamate. It functions in the pathway sulfur metabolism; glutathione metabolism. This is Glutathione hydrolase proenzyme (ggt) from Pseudomonas aeruginosa (strain ATCC 15692 / DSM 22644 / CIP 104116 / JCM 14847 / LMG 12228 / 1C / PRS 101 / PAO1).